A 195-amino-acid polypeptide reads, in one-letter code: Recombination protein RecR (195 aa).

The C4-type zinc finger occupies 53 to 68 (CTICHNLDTISPCSIC). The 96-residue stretch at 76–171 (SIICVVEELG…KVTRLACGIP (96 aa)) folds into the Toprim domain.

The protein belongs to the RecR family.

Its function is as follows. May play a role in DNA repair. It seems to be involved in an RecBC-independent recombinational process of DNA repair. It may act with RecF and RecO. In Anaplasma marginale (strain St. Maries), this protein is Recombination protein RecR.